We begin with the raw amino-acid sequence, 350 residues long: tRNA uridine(34) hydroxylase (350 aa).

Residues 146 to 240 (DDPDALFIDM…YARKAREQGL (95 aa)) enclose the Rhodanese domain. The active-site Cysteine persulfide intermediate is cysteine 200.

It belongs to the TrhO family.

It carries out the reaction uridine(34) in tRNA + AH2 + O2 = 5-hydroxyuridine(34) in tRNA + A + H2O. In terms of biological role, catalyzes oxygen-dependent 5-hydroxyuridine (ho5U) modification at position 34 in tRNAs, the first step in 5-carboxymethoxyuridine (cmo5U) biosynthesis. May be part of an alternate pathway, which is able to bypass cmo5U biogenesis in a subset of tRNAs under aerobic conditions. The polypeptide is tRNA uridine(34) hydroxylase (Escherichia coli O17:K52:H18 (strain UMN026 / ExPEC)).